A 286-amino-acid polypeptide reads, in one-letter code: uncharacterized protein (286 aa).

Helical transmembrane passes span 201–221 (VIYS…LCET) and 231–251 (AIIL…YLMM).

Its subcellular location is the cell membrane. This is an uncharacterized protein from Methanocaldococcus jannaschii (strain ATCC 43067 / DSM 2661 / JAL-1 / JCM 10045 / NBRC 100440) (Methanococcus jannaschii).